The chain runs to 157 residues: MPRRREVPKREILPDPKFGNVELSKFMNVIMEGGKKAVAERIIYGALDLIQKKHPDKDPLEAFVVAINNVKPMVEVKSRRVGGANYQVPVEVRPVRRLALSMRWLKEAARKRGEKSMAQRLANELLEATEGRGGAMKRRDEVHRMAEANKAFSHFRF.

Belongs to the universal ribosomal protein uS7 family. Part of the 30S ribosomal subunit. Contacts proteins S9 and S11.

Functionally, one of the primary rRNA binding proteins, it binds directly to 16S rRNA where it nucleates assembly of the head domain of the 30S subunit. Is located at the subunit interface close to the decoding center, probably blocks exit of the E-site tRNA. The protein is Small ribosomal subunit protein uS7 of Delftia acidovorans (strain DSM 14801 / SPH-1).